A 262-amino-acid chain; its full sequence is Cytochrome c oxidase subunit 3 (262 aa).

Transmembrane regions (helical) follow at residues 39-59, 83-103, 120-140, 163-183, 201-221, and 240-260; these read YTMT…YQWW, GMIL…WAFF, VGII…ILLA, GLFF…YEYI, ATGF…ICFL, and AWYW…IYWW.

Belongs to the cytochrome c oxidase subunit 3 family. As to quaternary structure, component of the cytochrome c oxidase (complex IV, CIV), a multisubunit enzyme composed of a catalytic core of 3 subunits and several supernumerary subunits. The complex exists as a monomer or a dimer and forms supercomplexes (SCs) in the inner mitochondrial membrane with ubiquinol-cytochrome c oxidoreductase (cytochrome b-c1 complex, complex III, CIII).

The protein localises to the mitochondrion inner membrane. It carries out the reaction 4 Fe(II)-[cytochrome c] + O2 + 8 H(+)(in) = 4 Fe(III)-[cytochrome c] + 2 H2O + 4 H(+)(out). In terms of biological role, component of the cytochrome c oxidase, the last enzyme in the mitochondrial electron transport chain which drives oxidative phosphorylation. The respiratory chain contains 3 multisubunit complexes succinate dehydrogenase (complex II, CII), ubiquinol-cytochrome c oxidoreductase (cytochrome b-c1 complex, complex III, CIII) and cytochrome c oxidase (complex IV, CIV), that cooperate to transfer electrons derived from NADH and succinate to molecular oxygen, creating an electrochemical gradient over the inner membrane that drives transmembrane transport and the ATP synthase. Cytochrome c oxidase is the component of the respiratory chain that catalyzes the reduction of oxygen to water. Electrons originating from reduced cytochrome c in the intermembrane space (IMS) are transferred via the dinuclear copper A center (CU(A)) of subunit 2 and heme A of subunit 1 to the active site in subunit 1, a binuclear center (BNC) formed by heme A3 and copper B (CU(B)). The BNC reduces molecular oxygen to 2 water molecules using 4 electrons from cytochrome c in the IMS and 4 protons from the mitochondrial matrix. The chain is Cytochrome c oxidase subunit 3 (COIII) from Anopheles quadrimaculatus (Common malaria mosquito).